The following is a 645-amino-acid chain: Translation factor GUF1 homolog, mitochondrial (645 aa).

The tr-type G domain maps to 40 to 215 (DKIRNFGIVA…AIIDRVPAPT (176 aa)). GTP is bound by residues 49-56 (AHVDHGKS), 108-112 (DTPGH), and 162-165 (NKID).

It belongs to the TRAFAC class translation factor GTPase superfamily. Classic translation factor GTPase family. LepA subfamily.

It localises to the mitochondrion inner membrane. The enzyme catalyses GTP + H2O = GDP + phosphate + H(+). In terms of biological role, promotes mitochondrial protein synthesis. May act as a fidelity factor of the translation reaction, by catalyzing a one-codon backward translocation of tRNAs on improperly translocated ribosomes. Binds to mitochondrial ribosomes in a GTP-dependent manner. In Caenorhabditis elegans, this protein is Translation factor GUF1 homolog, mitochondrial.